A 238-amino-acid polypeptide reads, in one-letter code: MVEKKSPAEGWPVVNGDYIVGDPESPVAATTLASHIEDVPVEAGAAIAGPCKTENLGIEKMIANLISNPNIRFLILCGSEVQGHITGQSIEALHQNGVDPDKRNIIGATGAIPYIENIPDEGIERFQKQLEIVNLIDVEDADAIKAKVKECIEKDPGAFEEEAMVIKVEEGGEEEEGEEVKPVAPETALIEARMRNIQTQVKMIGSTNRMFAGMYSGKVQGIMIGLAFTLTLGILLLV.

Residues 2–218 lie on the Cytoplasmic side of the membrane; that stretch reads VEKKSPAEGW…RMFAGMYSGK (217 aa). His84 provides a ligand contact to 5-hydroxybenzimidazolylcob(I)amide. Residues 219–237 traverse the membrane as a helical segment; that stretch reads VQGIMIGLAFTLTLGILLL. Position 238 (Val238) is a topological domain, extracellular.

The protein belongs to the MtrA family. In terms of assembly, the complex is composed of 8 subunits; MtrA, MtrB, MtrC, MtrD, MtrE, MtrF, MtrG and MtrH. 5-hydroxybenzimidazolylcob(I)amide is required as a cofactor.

The protein localises to the cell membrane. It carries out the reaction 5-methyl-5,6,7,8-tetrahydromethanopterin + coenzyme M + 2 Na(+)(in) = 5,6,7,8-tetrahydromethanopterin + methyl-coenzyme M + 2 Na(+)(out). It participates in one-carbon metabolism; methanogenesis from CO(2); methyl-coenzyme M from 5,10-methylene-5,6,7,8-tetrahydromethanopterin: step 2/2. Part of a complex that catalyzes the formation of methyl-coenzyme M and tetrahydromethanopterin from coenzyme M and methyl-tetrahydromethanopterin. This is an energy-conserving, sodium-ion translocating step. The protein is Tetrahydromethanopterin S-methyltransferase subunit A 1 of Methanothermobacter thermautotrophicus (strain ATCC 29096 / DSM 1053 / JCM 10044 / NBRC 100330 / Delta H) (Methanobacterium thermoautotrophicum).